A 378-amino-acid polypeptide reads, in one-letter code: Peptide methionine sulfoxide reductase MsrA/MsrB (378 aa).

The tract at residues 40-197 (QQATLAGGCF…KVRYNYYRYA (158 aa)) is peptide methionine sulfoxide reductase A. Residue C48 is part of the active site. The MsrB domain maps to 240–362 (DEQIRAKLTS…NSAAMRFIPK (123 aa)). The active-site Nucleophile is C351.

It in the N-terminal section; belongs to the MsrA Met sulfoxide reductase family. In the C-terminal section; belongs to the MsrB Met sulfoxide reductase family.

The enzyme catalyses L-methionyl-[protein] + [thioredoxin]-disulfide + H2O = L-methionyl-(S)-S-oxide-[protein] + [thioredoxin]-dithiol. The catalysed reaction is [thioredoxin]-disulfide + L-methionine + H2O = L-methionine (S)-S-oxide + [thioredoxin]-dithiol. It catalyses the reaction L-methionyl-[protein] + [thioredoxin]-disulfide + H2O = L-methionyl-(R)-S-oxide-[protein] + [thioredoxin]-dithiol. Its function is as follows. Has an important function as a repair enzyme for proteins that have been inactivated by oxidation. Catalyzes the reversible oxidation-reduction of methionine sulfoxide in proteins to methionine. The polypeptide is Peptide methionine sulfoxide reductase MsrA/MsrB (msrAB) (Vibrio cholerae serotype O1 (strain ATCC 39315 / El Tor Inaba N16961)).